Here is a 143-residue protein sequence, read N- to C-terminus: Large ribosomal subunit protein uL13 (143 aa).

It belongs to the universal ribosomal protein uL13 family. As to quaternary structure, part of the 50S ribosomal subunit.

In terms of biological role, this protein is one of the early assembly proteins of the 50S ribosomal subunit, although it is not seen to bind rRNA by itself. It is important during the early stages of 50S assembly. This Methanosarcina acetivorans (strain ATCC 35395 / DSM 2834 / JCM 12185 / C2A) protein is Large ribosomal subunit protein uL13.